A 417-amino-acid polypeptide reads, in one-letter code: NADH-quinone oxidoreductase subunit D (417 aa).

It belongs to the complex I 49 kDa subunit family. As to quaternary structure, NDH-1 is composed of 14 different subunits. Subunits NuoB, C, D, E, F, and G constitute the peripheral sector of the complex.

It localises to the cell inner membrane. The enzyme catalyses a quinone + NADH + 5 H(+)(in) = a quinol + NAD(+) + 4 H(+)(out). Functionally, NDH-1 shuttles electrons from NADH, via FMN and iron-sulfur (Fe-S) centers, to quinones in the respiratory chain. The immediate electron acceptor for the enzyme in this species is believed to be ubiquinone. Couples the redox reaction to proton translocation (for every two electrons transferred, four hydrogen ions are translocated across the cytoplasmic membrane), and thus conserves the redox energy in a proton gradient. This is NADH-quinone oxidoreductase subunit D from Polaromonas naphthalenivorans (strain CJ2).